We begin with the raw amino-acid sequence, 425 residues long: tRNA (guanine-N(7)-)-methyltransferase non-catalytic subunit wuho (425 aa).

The segment at Ala67–Val102 is disordered. Residues Gly88–Val102 are compositionally biased toward low complexity. WD repeat units follow at residues Val97–Leu138, Pro142–Arg181, Gly185–Ser224, Gly228–Gln266, and Ala325–Ser365.

Belongs to the WD repeat TRM82 family. Forms a heterodimer with the catalytic subunit Mettl1. Interacts with mei-P26 and weakly interacts with bgcn; required for the function or formation of the mei-P26-bgcn-bam-sxl complex. Interacts with nanos; may be involved in mei-P26-dependent derepression of the BMP signaling pathway. Interacts with Myc; the interaction may be mediated by mei-P26 and may be involved in the regulation of ribosome biogenesis. In testis, it is present at high level in hub cells, a niche for germline stem cells of testis. Ubiquitously expressed in all testicular cells throughout spermatogenesis. Ubiquitously expressed in all germline and somatic cells of the ovary.

It localises to the nucleus. Its subcellular location is the cytoplasm. The protein operates within tRNA modification; N(7)-methylguanine-tRNA biosynthesis. Required for the Mettl1-dependent formation of N(7)-methylguanine at position 46 (m7G46) in tRNA. In the Mettl1-wuho methyltransferase complex, it is required to stabilize and induce conformational changes of the catalytic subunit. Required for binding of nanos mRNA and repression of translation by the mei-P26-bgcn-bam-sxl complex. May cooperate with mei-P26 and nanos to derepress the BMP signaling pathway. May cooperate with mei-P26 to suppress expression of a subset of microRNAs. May cooperate with mei-P26 to regulate bam expression levels in germline cells during gametogenesis. Required to promote mitosis to meiosis transition during gametogenesis. May regulate germline cell division in part by regulating ribosome biogenesis. The polypeptide is tRNA (guanine-N(7)-)-methyltransferase non-catalytic subunit wuho (Drosophila yakuba (Fruit fly)).